We begin with the raw amino-acid sequence, 390 residues long: MAGIEGFAAIRGKLAQSEAAPGIVLIACAALALLIANSPLAAAWHALFHHPLPWTPVAKLDTLHLWINDGLMAVFFFVVGLEIKREVLAGELSDARRRRLPVLAAVAGMAVPALIYLAITAGQPALHRGWAIPSATDIAFAIGVLALVGRGLPPSLRLFLLTVAIVDDLGAVVVIALFYTSGLKLAWLGASALILAALVLVNRMGVRALLPYLAGAVALWYTVLHSGIHATVAGVLAAMTVPLALNRRHDSPLLRLEHALVAPNGFVIVPLFGLANAGVALGADFGESPALPLGIAMGLLLGKQFGILGSILVAERLGFAHRPEGASLRHLWGIALLCGIGFTMSLFIAGLAFPETPMLVEEAKLGILGGSLVSALAGLLVLRGSGRPVV.

A run of 11 helical transmembrane segments spans residues I23–A43, L63–I83, L100–T120, G129–G149, L158–F178, S181–V201, A208–I228, G265–F285, L293–V313, L331–L351, and E362–L382.

It belongs to the NhaA Na(+)/H(+) (TC 2.A.33) antiporter family.

The protein resides in the cell inner membrane. It carries out the reaction Na(+)(in) + 2 H(+)(out) = Na(+)(out) + 2 H(+)(in). Its function is as follows. Na(+)/H(+) antiporter that extrudes sodium in exchange for external protons. This Novosphingobium aromaticivorans (strain ATCC 700278 / DSM 12444 / CCUG 56034 / CIP 105152 / NBRC 16084 / F199) protein is Na(+)/H(+) antiporter NhaA 2.